A 95-amino-acid polypeptide reads, in one-letter code: Large ribosomal subunit protein bL28 (95 aa).

The disordered stretch occupies residues 1–22 (MSRRCELTGKGPMTGNNVSHAN).

It belongs to the bacterial ribosomal protein bL28 family.

This is Large ribosomal subunit protein bL28 from Ruegeria pomeroyi (strain ATCC 700808 / DSM 15171 / DSS-3) (Silicibacter pomeroyi).